The primary structure comprises 579 residues: Transcription factor MTB2 (579 aa).

The disordered stretch occupies residues 373–439 (GGMQIDFTNS…PLNHVEAERQ (67 aa)). The segment covering 382 to 392 (SRPVVSPVPTV) has biased composition (low complexity). Basic and acidic residues-rich tracts occupy residues 393–415 (ESEH…DERR) and 425–439 (NGRE…AERQ). The basic motif; degenerate stretch occupies residues 428 to 441 (EEPLNHVEAERQRR). A bHLH domain is found at 428–477 (EEPLNHVEAERQRREKLNQRFYALRAVVPNISKMDKASLLGDAIAHITDM). The segment at 442 to 477 (EKLNQRFYALRAVVPNISKMDKASLLGDAIAHITDM) is helix-loop-helix motif.

It is found in the nucleus. In terms of biological role, transcription factor that negatively regulates jasmonate (JA) signaling. Negatively regulates JA-dependent response to wounding, JA-induced expression of defense genes, JA-dependent responses against herbivorous insects, and JA-dependent resistance against Botrytis cinerea infection. Plays a positive role in resistance against the bacterial pathogen Pseudomonas syringae pv tomato DC3000. This chain is Transcription factor MTB2, found in Solanum lycopersicum (Tomato).